A 198-amino-acid polypeptide reads, in one-letter code: ATP-dependent Clp protease proteolytic subunit (198 aa).

Residue Ser-98 is the Nucleophile of the active site. His-123 is an active-site residue.

This sequence belongs to the peptidase S14 family. Fourteen ClpP subunits assemble into 2 heptameric rings which stack back to back to give a disk-like structure with a central cavity, resembling the structure of eukaryotic proteasomes.

The protein resides in the cytoplasm. The catalysed reaction is Hydrolysis of proteins to small peptides in the presence of ATP and magnesium. alpha-casein is the usual test substrate. In the absence of ATP, only oligopeptides shorter than five residues are hydrolyzed (such as succinyl-Leu-Tyr-|-NHMec, and Leu-Tyr-Leu-|-Tyr-Trp, in which cleavage of the -Tyr-|-Leu- and -Tyr-|-Trp bonds also occurs).. Its function is as follows. Cleaves peptides in various proteins in a process that requires ATP hydrolysis. Has a chymotrypsin-like activity. Plays a major role in the degradation of misfolded proteins. This chain is ATP-dependent Clp protease proteolytic subunit, found in Bacillus velezensis (strain DSM 23117 / BGSC 10A6 / LMG 26770 / FZB42) (Bacillus amyloliquefaciens subsp. plantarum).